We begin with the raw amino-acid sequence, 75 residues long: Probable pilin MJ0431 (75 aa).

Positions Met-1 to Gly-15 are excised as a propeptide. Residues Gln-16–Leu-24 carry the QXSXEXXXL motif.

Post-translationally, the N-terminus is cleaved by the prepilin peptidase EppA, which recognizes the class III signal sequence.

It localises to the secreted. Its subcellular location is the cell surface. The protein resides in the fimbrium. This Methanocaldococcus jannaschii (strain ATCC 43067 / DSM 2661 / JAL-1 / JCM 10045 / NBRC 100440) (Methanococcus jannaschii) protein is Probable pilin MJ0431.